The following is a 189-amino-acid chain: dTTP/UTP pyrophosphatase (189 aa).

Asp73 serves as the catalytic Proton acceptor.

It belongs to the Maf family. YhdE subfamily. Requires a divalent metal cation as cofactor.

The protein resides in the cytoplasm. It carries out the reaction dTTP + H2O = dTMP + diphosphate + H(+). The catalysed reaction is UTP + H2O = UMP + diphosphate + H(+). In terms of biological role, nucleoside triphosphate pyrophosphatase that hydrolyzes dTTP and UTP. May have a dual role in cell division arrest and in preventing the incorporation of modified nucleotides into cellular nucleic acids. This Vibrio parahaemolyticus serotype O3:K6 (strain RIMD 2210633) protein is dTTP/UTP pyrophosphatase.